The primary structure comprises 341 residues: MDGEVLANKSCCGAVVTAFSVIGIVFTILKFTSFASFVYKTFFAKGVKLSVYGAKKGYWAVVTGATDGIGKEYATQLAMSGFNVVLISRTQEKLDALAKELETVAKVKTRTIAIDYTKTTAETFEKLHQDLVGTPITVLINNVGQSHYMPTSFAETTVKEMDDIMHINCFGTLHTTKAVLSIMLRERQKNEKGPRCLILTMGSFAGLLPSPYLSTYAGSKAFLSNWSASLGEEVKKQGIDVWCFNSYLVVSAMSKVRRPTLTIPTPKKFVRAALSSIGLQRGGTNPYISQPYPSHAVMSWSLEQLLGSAKGFVVSQVAAMHLSIRKRALRKEARLQAQNQA.

Residues 15-35 form a helical membrane-spanning segment; the sequence is VVTAFSVIGIVFTILKFTSFA. The NADP(+) site is built by Val61, Asp115, Asn142, Lys177, Tyr216, Lys220, Val249, and Ser251. Tyr216 serves as the catalytic Proton donor. The active-site Lowers pKa of active site Tyr is Lys220.

This sequence belongs to the short-chain dehydrogenases/reductases (SDR) family.

It localises to the endoplasmic reticulum membrane. The enzyme catalyses a very-long-chain (3R)-3-hydroxyacyl-CoA + NADP(+) = a very-long-chain 3-oxoacyl-CoA + NADPH + H(+). Its pathway is lipid metabolism; fatty acid biosynthesis. Functionally, component of the microsomal membrane bound fatty acid elongation system, which produces the 26-carbon very long-chain fatty acids (VLCFA) from palmitate. Catalyzes the reduction of the 3-ketoacyl-CoA intermediate that is formed in each cycle of fatty acid elongation. VLCFAs serve as precursors for ceramide and sphingolipids. In Schizosaccharomyces pombe (strain 972 / ATCC 24843) (Fission yeast), this protein is Very-long-chain 3-oxoacyl-CoA reductase.